Here is a 158-residue protein sequence, read N- to C-terminus: uncharacterized protein (158 aa).

A signal peptide spans 1–16 (MFRPILILTILSCVLA). Residue asparagine 122 is glycosylated (N-linked (GlcNAc...) asparagine).

This is an uncharacterized protein from Caenorhabditis elegans.